Here is a 669-residue protein sequence, read N- to C-terminus: MSKVFKLHSEFKPGGDQPTAIASLCEGLEDGLAHQTLLGVTGSGKTFTIANVIANLNRPTMVLAPNKTLAAQLYSEMKEFFPENAVEYFVSYYDYYQPEAYVPSSDTFIEKDASVNEHIEQMRLSATKALLERKDVIVVSSVSAIYGLGDPDSYLKMMLHLSNGMIIDQRAILRRLADLQYTRNDQAFQRGTFRVRGEVIDIFPAESDDYALRVELFDEEVERLSLFDPLTGQIHYNVPRFTVYPKTHYVTPRERILDAMEKIKQELAERRKVLLANDKLVEEQRVTQRTQFDLEMMNELGYCSGIENYSRYLSGRGPGEPPPTLFDYLPADGLLVIDESHVTIPQIGGMYKGDRSRKETLVEYGFRLPSALDNRPLRFEEFEALAPQTIYVSATPGKYELEKSGNDIVEQVVRPTGLLDPVVEVRPVATQVDDLLSEIRIRAAKNERVLVTTLTKRMAEDLTEYLEEHGERVRYLHSDIDTVERVEIIRDLRLGEFDVLVGINLLREGLDMPEVSLVAILDADKEGFLRSERSLIQTIGRAARNLEGKAILYGDKITDSMAKAIGETERRREKQQQFNLEHGIVPKGLNKKIGDILKIGQPTQGRNKKGHKAVDTHEDYPLLSTAELEKEIQRLETEMYQHAKDLEFEKAAQTRDKLQTLRAQFIANS.

The Helicase ATP-binding domain maps to 26–183 (EGLEDGLAHQ…RRLADLQYTR (158 aa)). 39-46 (GVTGSGKT) lines the ATP pocket. Residues 92–115 (YYDYYQPEAYVPSSDTFIEKDASV) carry the Beta-hairpin motif. In terms of domain architecture, Helicase C-terminal spans 431–593 (QVDDLLSEIR…IVPKGLNKKI (163 aa)). A UVR domain is found at 629–664 (EKEIQRLETEMYQHAKDLEFEKAAQTRDKLQTLRAQ).

Belongs to the UvrB family. Forms a heterotetramer with UvrA during the search for lesions. Interacts with UvrC in an incision complex.

It localises to the cytoplasm. Its function is as follows. The UvrABC repair system catalyzes the recognition and processing of DNA lesions. A damage recognition complex composed of 2 UvrA and 2 UvrB subunits scans DNA for abnormalities. Upon binding of the UvrA(2)B(2) complex to a putative damaged site, the DNA wraps around one UvrB monomer. DNA wrap is dependent on ATP binding by UvrB and probably causes local melting of the DNA helix, facilitating insertion of UvrB beta-hairpin between the DNA strands. Then UvrB probes one DNA strand for the presence of a lesion. If a lesion is found the UvrA subunits dissociate and the UvrB-DNA preincision complex is formed. This complex is subsequently bound by UvrC and the second UvrB is released. If no lesion is found, the DNA wraps around the other UvrB subunit that will check the other stand for damage. This Proteus mirabilis (strain HI4320) protein is UvrABC system protein B.